Reading from the N-terminus, the 386-residue chain is Demethylsterigmatocystin 6-O-methyltransferase (386 aa).

Position 137-150 (137-150 (FDISGPCTQILPDF)) interacts with substrate. The substrate binding stretch occupies residues 177 to 197 (MFEWMPQHPKHMESLGHLMAL). Residues 228-229 (GG), D253, 273-274 (NF), and R289 contribute to the S-adenosyl-L-methionine site. Catalysis depends on H293, which acts as the Proton acceptor.

Belongs to the class I-like SAM-binding methyltransferase superfamily. Cation-independent O-methyltransferase family. COMT subfamily.

It catalyses the reaction 6-demethylsterigmatocystin + S-adenosyl-L-methionine = sterigmatocystin + S-adenosyl-L-homocysteine + H(+). Its pathway is mycotoxin biosynthesis; aflatoxin biosynthesis. Catalyzes both the conversion of demethylsterigmatocystin (DMST) to sterigmatocystin and the conversion of dihydrodemethylsterigmatocystin to dihydrosterigmatocystin (DHDMST) during aflatoxin biosynthesis. The sequence is that of Demethylsterigmatocystin 6-O-methyltransferase (omtB) from Aspergillus flavus (strain ATCC 200026 / FGSC A1120 / IAM 13836 / NRRL 3357 / JCM 12722 / SRRC 167).